A 309-amino-acid chain; its full sequence is Probable lipid kinase YegS-like (309 aa).

The 134-residue stretch at Met1–His134 folds into the DAGKc domain. ATP contacts are provided by residues Thr39, Gly65–Glu71, and Thr96. Residues Val219, Asp222, and Leu224 each contribute to the Mg(2+) site. The active-site Proton acceptor is Glu280.

Belongs to the diacylglycerol/lipid kinase family. YegS lipid kinase subfamily. It depends on Mg(2+) as a cofactor. Ca(2+) is required as a cofactor.

It localises to the cytoplasm. Functionally, probably phosphorylates lipids; the in vivo substrate is unknown. The sequence is that of Probable lipid kinase YegS-like from Xanthomonas oryzae pv. oryzae (strain MAFF 311018).